A 169-amino-acid polypeptide reads, in one-letter code: Macrocypin-1a (169 aa).

This sequence belongs to the protease inhibitor I85 family.

Functionally, inhibits papain and cysteine cathepsin endopeptidases, and also inhibits cathepsins B and H, which exhibit both exopeptidase and endopeptidase activities. The protein is Macrocypin-1a of Macrolepiota procera (Parasol mushroom).